A 144-amino-acid polypeptide reads, in one-letter code: D-aminoacyl-tRNA deacylase (144 aa).

The Gly-cisPro motif, important for rejection of L-amino acids motif lies at 136-137 (GP).

This sequence belongs to the DTD family. As to quaternary structure, homodimer.

Its subcellular location is the cytoplasm. The catalysed reaction is glycyl-tRNA(Ala) + H2O = tRNA(Ala) + glycine + H(+). It carries out the reaction a D-aminoacyl-tRNA + H2O = a tRNA + a D-alpha-amino acid + H(+). An aminoacyl-tRNA editing enzyme that deacylates mischarged D-aminoacyl-tRNAs. Also deacylates mischarged glycyl-tRNA(Ala), protecting cells against glycine mischarging by AlaRS. Acts via tRNA-based rather than protein-based catalysis; rejects L-amino acids rather than detecting D-amino acids in the active site. By recycling D-aminoacyl-tRNA to D-amino acids and free tRNA molecules, this enzyme counteracts the toxicity associated with the formation of D-aminoacyl-tRNA entities in vivo and helps enforce protein L-homochirality. In Vibrio cholerae serotype O1 (strain ATCC 39541 / Classical Ogawa 395 / O395), this protein is D-aminoacyl-tRNA deacylase.